Consider the following 210-residue polypeptide: 3-hexulose-6-phosphate synthase (210 aa).

This sequence belongs to the HPS/KGPDC family. HPS subfamily.

It carries out the reaction D-ribulose 5-phosphate + formaldehyde = D-arabino-hex-3-ulose 6-phosphate. Its pathway is one-carbon metabolism; formaldehyde assimilation via RuMP pathway; D-fructose 6-phosphate from D-ribulose 5-phosphate and formaldehyde: step 1/2. Its function is as follows. Catalyzes the condensation of ribulose 5-phosphate with formaldehyde to form 3-hexulose 6-phosphate. This is 3-hexulose-6-phosphate synthase from Staphylococcus haemolyticus (strain JCSC1435).